Reading from the N-terminus, the 276-residue chain is Undecaprenyl-diphosphatase (276 aa).

7 helical membrane-spanning segments follow: residues 40 to 60 (GLAF…TFFW), 98 to 118 (WLII…KDAI), 121 to 141 (IFRG…VLYY), 155 to 175 (MSFK…FPGI), 200 to 220 (FLLS…DIAT), 227 to 247 (VLLA…KLLM), and 255 to 275 (LDIF…LSVV).

The protein belongs to the UppP family.

It localises to the cell membrane. The catalysed reaction is di-trans,octa-cis-undecaprenyl diphosphate + H2O = di-trans,octa-cis-undecaprenyl phosphate + phosphate + H(+). Catalyzes the dephosphorylation of undecaprenyl diphosphate (UPP). This is Undecaprenyl-diphosphatase from Methanosphaera stadtmanae (strain ATCC 43021 / DSM 3091 / JCM 11832 / MCB-3).